We begin with the raw amino-acid sequence, 458 residues long: Phosphoglucosamine mutase (458 aa).

The active-site Phosphoserine intermediate is Ser-108. Positions 108, 247, 249, and 251 each coordinate Mg(2+). Phosphoserine is present on Ser-108.

Belongs to the phosphohexose mutase family. The cofactor is Mg(2+). Post-translationally, activated by phosphorylation.

It carries out the reaction alpha-D-glucosamine 1-phosphate = D-glucosamine 6-phosphate. In terms of biological role, catalyzes the conversion of glucosamine-6-phosphate to glucosamine-1-phosphate. The protein is Phosphoglucosamine mutase of Nitrosomonas europaea (strain ATCC 19718 / CIP 103999 / KCTC 2705 / NBRC 14298).